Reading from the N-terminus, the 181-residue chain is Adenylate kinase (181 aa).

ATP is bound at residue 10–15 (GAGKGT). The NMP stretch occupies residues 30 to 59 (STGDLFRANIGEGTPLGKEAKSYIDAGKLV). AMP contacts are provided by residues Thr31, Arg36, 57–59 (KLV), 85–88 (GFPR), and Gln92. Residues 126 to 132 (ARGRADD) form an LID region. Residue Arg127 participates in ATP binding. Positions 129 and 140 each coordinate AMP. Gly166 is a binding site for ATP.

The protein belongs to the adenylate kinase family. In terms of assembly, monomer.

Its subcellular location is the cytoplasm. The enzyme catalyses AMP + ATP = 2 ADP. It participates in purine metabolism; AMP biosynthesis via salvage pathway; AMP from ADP: step 1/1. Its function is as follows. Catalyzes the reversible transfer of the terminal phosphate group between ATP and AMP. Plays an important role in cellular energy homeostasis and in adenine nucleotide metabolism. The chain is Adenylate kinase from Corynebacterium diphtheriae (strain ATCC 700971 / NCTC 13129 / Biotype gravis).